The primary structure comprises 100 residues: Small ribosomal subunit protein uS14c (100 aa).

This sequence belongs to the universal ribosomal protein uS14 family. As to quaternary structure, part of the 30S ribosomal subunit.

It localises to the plastid. In terms of biological role, binds 16S rRNA, required for the assembly of 30S particles. The polypeptide is Small ribosomal subunit protein uS14c (rps14) (Cuscuta gronovii (Common dodder)).